The following is a 42-amino-acid chain: Delta-actinopoditoxin-Mb1a (42 aa).

Cystine bridges form between Cys-1–Cys-15, Cys-8–Cys-20, Cys-14–Cys-31, and Cys-16–Cys-42.

This sequence belongs to the neurotoxin 06 (delta-actx) family. As to expression, expressed by the venom gland.

Its subcellular location is the secreted. Functionally, neurotoxin that slows the inactivation of vertebrate tetrodotoxin-sensitive voltage-gated sodium channels (Nav) and most likely insect sodium channels presumably by binding to site 3 of the channel. Effects are an increase in resting tension, a muscle fasciculation and a decrease in indirect twitch tension. It fails to affect tetrodotoxin-resistant sodium currents. In vivo, is lethal to both vertebrates and insects. This chain is Delta-actinopoditoxin-Mb1a, found in Missulena bradleyi (Eastern mouse spider).